The following is a 193-amino-acid chain: Holliday junction branch migration complex subunit RuvA (193 aa).

Residues 1–64 are domain I; the sequence is MITSLTGTIL…EDAHLLYGFM (64 aa). The domain II stretch occupies residues 65–139; it reads TVAERDMFRL…DKMGGIAPGP (75 aa). Positions 139–143 are flexible linker; that stretch reads PMGRG. The domain III stretch occupies residues 144–193; that stretch reads GAGDPRQEAIAALLTLGYKPAQASQAIAGLADGLGLEDLIRQSLQNLSRH.

Belongs to the RuvA family. Homotetramer. Forms an RuvA(8)-RuvB(12)-Holliday junction (HJ) complex. HJ DNA is sandwiched between 2 RuvA tetramers; dsDNA enters through RuvA and exits via RuvB. An RuvB hexamer assembles on each DNA strand where it exits the tetramer. Each RuvB hexamer is contacted by two RuvA subunits (via domain III) on 2 adjacent RuvB subunits; this complex drives branch migration. In the full resolvosome a probable DNA-RuvA(4)-RuvB(12)-RuvC(2) complex forms which resolves the HJ.

It localises to the cytoplasm. The RuvA-RuvB-RuvC complex processes Holliday junction (HJ) DNA during genetic recombination and DNA repair, while the RuvA-RuvB complex plays an important role in the rescue of blocked DNA replication forks via replication fork reversal (RFR). RuvA specifically binds to HJ cruciform DNA, conferring on it an open structure. The RuvB hexamer acts as an ATP-dependent pump, pulling dsDNA into and through the RuvAB complex. HJ branch migration allows RuvC to scan DNA until it finds its consensus sequence, where it cleaves and resolves the cruciform DNA. The polypeptide is Holliday junction branch migration complex subunit RuvA (Acidithiobacillus ferrooxidans (strain ATCC 53993 / BNL-5-31) (Leptospirillum ferrooxidans (ATCC 53993))).